Consider the following 434-residue polypeptide: Iron transporter MagA (434 aa).

10 helical membrane-spanning segments follow: residues 6–26 (PELT…GMMT), 31–51 (PAVV…FGLV), 56–76 (AVAT…GMKL), 86–106 (KTAI…ALLL), 113–133 (SLGL…AVVI), 176–196 (LLPA…LLFW), 269–289 (SVLL…KFIW), 294–314 (TVLT…VTAL), 321–341 (WPSA…SFLL), and 357–377 (KLVV…LFTM).

Belongs to the monovalent cation:proton antiporter 2 (CPA2) transporter (TC 2.A.37) family.

It localises to the membrane. Iron transporter, which is required for the synthesis of bacterial magnetic particles (BMPs). Probably involved in the transport of iron from the environment into the cytoplasm across the cell membrane, and then from the cytoplasm into the BMP lipid vesicle across the BMP membrane. In Paramagnetospirillum magneticum (strain ATCC 700264 / AMB-1) (Magnetospirillum magneticum), this protein is Iron transporter MagA (magA).